The chain runs to 422 residues: Transcription termination factor Rho 1 (422 aa).

Positions 49-124 (AAIGGGVVEI…VKAHSINFTD (76 aa)) constitute a Rho RNA-BD domain. Residues 173-178 (GKGQRA), 185-190 (RAGKTI), and arginine 216 contribute to the ATP site.

The protein belongs to the Rho family. Homohexamer. The homohexamer assembles into an open ring structure.

In terms of biological role, facilitates transcription termination by a mechanism that involves Rho binding to the nascent RNA, activation of Rho's RNA-dependent ATPase activity, and release of the mRNA from the DNA template. The protein is Transcription termination factor Rho 1 of Ehrlichia chaffeensis (strain ATCC CRL-10679 / Arkansas).